The following is a 269-amino-acid chain: Nuclear egress protein 2 (269 aa).

Residues 1 to 247 (MSRRTYVRSE…VWKLALPVAN (247 aa)) lie on the Perinuclear space side of the membrane. Residues 248 to 268 (VTYALFIVIVLVVVLGAVLFW) form a helical membrane-spanning segment. K269 is a topological domain (nuclear).

The protein belongs to the herpesviridae NEC2 protein family. Forms a heterohexameric complex with NEC1. In terms of processing, phosphorylated.

It is found in the host nucleus inner membrane. Functionally, plays an essential role in virion nuclear egress, the first step of virion release from infected cell. Within the host nucleus, NEC1 interacts with the newly formed capsid through the vertexes and directs it to the inner nuclear membrane by associating with NEC2. Induces the budding of the capsid at the inner nuclear membrane as well as its envelopment into the perinuclear space. There, the NEC1/NEC2 complex promotes the fusion of the enveloped capsid with the outer nuclear membrane and the subsequent release of the viral capsid into the cytoplasm where it will reach the secondary budding sites in the host Golgi or trans-Golgi network. The polypeptide is Nuclear egress protein 2 (Homo sapiens (Human)).